Consider the following 369-residue polypeptide: 4-hydroxy-3-methylbut-2-en-1-yl diphosphate synthase (flavodoxin) (369 aa).

Residues C270, C273, C305, and E312 each contribute to the [4Fe-4S] cluster site.

This sequence belongs to the IspG family. [4Fe-4S] cluster is required as a cofactor.

It catalyses the reaction (2E)-4-hydroxy-3-methylbut-2-enyl diphosphate + oxidized [flavodoxin] + H2O + 2 H(+) = 2-C-methyl-D-erythritol 2,4-cyclic diphosphate + reduced [flavodoxin]. It functions in the pathway isoprenoid biosynthesis; isopentenyl diphosphate biosynthesis via DXP pathway; isopentenyl diphosphate from 1-deoxy-D-xylulose 5-phosphate: step 5/6. Its function is as follows. Converts 2C-methyl-D-erythritol 2,4-cyclodiphosphate (ME-2,4cPP) into 1-hydroxy-2-methyl-2-(E)-butenyl 4-diphosphate. The sequence is that of 4-hydroxy-3-methylbut-2-en-1-yl diphosphate synthase (flavodoxin) from Pseudomonas putida (strain ATCC 700007 / DSM 6899 / JCM 31910 / BCRC 17059 / LMG 24140 / F1).